The sequence spans 386 residues: Alcohol dehydrogenase-like 2 (386 aa).

Zn(2+)-binding residues include cysteine 51, threonine 53, histidine 74, cysteine 104, cysteine 107, cysteine 110, cysteine 118, and cysteine 183. The an alcohol site is built by threonine 53 and histidine 74. Threonine 53 is a binding site for NAD(+). NAD(+) contacts are provided by residues 208 to 213 (GLGAVG), aspartate 232, lysine 237, 302 to 304 (LGM), phenylalanine 329, and arginine 379.

It belongs to the zinc-containing alcohol dehydrogenase family. Class-III subfamily. Homodimer. Zn(2+) serves as cofactor.

The protein resides in the cytoplasm. The enzyme catalyses a primary alcohol + NAD(+) = an aldehyde + NADH + H(+). It catalyses the reaction a secondary alcohol + NAD(+) = a ketone + NADH + H(+). This chain is Alcohol dehydrogenase-like 2, found in Arabidopsis thaliana (Mouse-ear cress).